A 499-amino-acid polypeptide reads, in one-letter code: Glycerol kinase (499 aa).

Residue Thr-13 participates in ADP binding. ATP contacts are provided by Thr-13, Thr-14, and Ser-15. Thr-13 contacts sn-glycerol 3-phosphate. Arg-17 contributes to the ADP binding site. Residues Arg-83, Glu-84, Tyr-135, and Asp-244 each coordinate sn-glycerol 3-phosphate. Positions 83, 84, 135, 244, and 245 each coordinate glycerol. The ADP site is built by Thr-266 and Gly-309. 4 residues coordinate ATP: Thr-266, Gly-309, Gln-313, and Gly-410. ADP is bound by residues Gly-410 and Asn-414.

Belongs to the FGGY kinase family.

The enzyme catalyses glycerol + ATP = sn-glycerol 3-phosphate + ADP + H(+). The protein operates within polyol metabolism; glycerol degradation via glycerol kinase pathway; sn-glycerol 3-phosphate from glycerol: step 1/1. Inhibited by fructose 1,6-bisphosphate (FBP). Its function is as follows. Key enzyme in the regulation of glycerol uptake and metabolism. Catalyzes the phosphorylation of glycerol to yield sn-glycerol 3-phosphate. The protein is Glycerol kinase of Paraburkholderia xenovorans (strain LB400).